Consider the following 342-residue polypeptide: Nicotinate-nucleotide--dimethylbenzimidazole phosphoribosyltransferase (342 aa).

Glutamate 311 (proton acceptor) is an active-site residue.

Belongs to the CobT family.

The enzyme catalyses 5,6-dimethylbenzimidazole + nicotinate beta-D-ribonucleotide = alpha-ribazole 5'-phosphate + nicotinate + H(+). The protein operates within nucleoside biosynthesis; alpha-ribazole biosynthesis; alpha-ribazole from 5,6-dimethylbenzimidazole: step 1/2. In terms of biological role, catalyzes the synthesis of alpha-ribazole-5'-phosphate from nicotinate mononucleotide (NAMN) and 5,6-dimethylbenzimidazole (DMB). The polypeptide is Nicotinate-nucleotide--dimethylbenzimidazole phosphoribosyltransferase (Shewanella piezotolerans (strain WP3 / JCM 13877)).